Here is a 668-residue protein sequence, read N- to C-terminus: Envelope glycoprotein (668 aa).

The N-terminal stretch at 1-34 (MEGPTHPKPSKDKTFSWDLIILVGVLLRLDAGMA) is a signal peptide. Topologically, residues 35 to 605 (NPSPHQVYNI…FNKSPWFTTL (571 aa)) are extracellular. Residues Asn-43 and Asn-58 are each glycosylated (N-linked (GlcNAc...) asparagine; by host). 2 cysteine pairs are disulfide-bonded: Cys-115–Cys-132 and Cys-124–Cys-137. The tract at residues 243 to 264 (PQAMGPNPVLPDQKPPSRQSQI) is disordered. Asn-286, Asn-322, and Asn-327 each carry an N-linked (GlcNAc...) asparagine; by host glycan. Cystine bridges form between Cys-332/Cys-335, Cys-332/Cys-558, and Cys-550/Cys-557. Positions 332–335 (CWLC) match the CXXC motif. N-linked (GlcNAc...) asparagine; by host glycans are attached at residues Asn-351, Asn-354, Asn-394, Asn-410, and Asn-430. Residues 467–487 (PISLTVALMLGGITVGGMARN) form a fusion peptide region. 2 coiled-coil regions span residues 495-544 (LETA…ILFL) and 554-590 (KEEC…SQQD). An immunosuppression region spans residues 533-549 (LQNRRGLDILFLQEGGL). A CX6CC motif is present at residues 550 to 558 (CTALKEECC). A helical membrane pass occupies residues 606-626 (ISSIMGPLMILLLILLFGPCI). Cys-625 is lipidated: S-palmitoyl cysteine; by host. Residues 627–668 (LNRLVQFVKDRISVVQTLVLTQQYQRLGQWRLRPTVSPQLNV) are Cytoplasmic-facing. Residues 650-653 (YQRL) carry the YXXL motif; contains endocytosis signal motif.

The mature envelope protein (Env) consists of a trimer of SU-TM heterodimers attached by a labile interchain disulfide bond. Specific enzymatic cleavages in vivo yield mature proteins. Envelope glycoproteins are synthesized as an inactive precursor that is N-glycosylated and processed likely by host cell furin or by a furin-like protease in the Golgi to yield the mature SU and TM proteins. The cleavage site between SU and TM requires the minimal sequence [KR]-X-[KR]-R. The R-peptide is released from the C-terminus of the cytoplasmic tail of the TM protein upon particle formation as a result of proteolytic cleavage by the viral protease. Cleavage of this peptide is required for TM to become fusogenic. Post-translationally, the CXXC motif is highly conserved across a broad range of retroviral envelope proteins. It is thought to participate in the formation of a labile disulfide bond possibly with the CX6CC motif present in the transmembrane protein. Isomerization of the intersubunit disulfide bond to an SU intrachain disulfide bond is thought to occur upon receptor recognition in order to allow membrane fusion. In terms of processing, the transmembrane protein is palmitoylated. The R-peptide is palmitoylated.

The protein localises to the virion membrane. It localises to the host cell membrane. Its function is as follows. The surface protein (SU) attaches the virus to the host cell by binding to its receptor. This interaction triggers the refolding of the transmembrane protein (TM) and is thought to activate its fusogenic potential by unmasking its fusion peptide. Fusion occurs at the host cell plasma membrane. Functionally, the transmembrane protein (TM) acts as a class I viral fusion protein. Under the current model, the protein has at least 3 conformational states: pre-fusion native state, pre-hairpin intermediate state, and post-fusion hairpin state. During viral and target cell membrane fusion, the coiled coil regions (heptad repeats) assume a trimer-of-hairpins structure, positioning the fusion peptide in close proximity to the C-terminal region of the ectodomain. The formation of this structure appears to drive apposition and subsequent fusion of viral and target cell membranes. Membranes fusion leads to delivery of the nucleocapsid into the cytoplasm. The polypeptide is Envelope glycoprotein (env) (Felidae (cat family)).